A 250-amino-acid polypeptide reads, in one-letter code: Ditrans,polycis-undecaprenyl-diphosphate synthase ((2E,6E)-farnesyl-diphosphate specific) (250 aa).

Aspartate 27 is an active-site residue. Aspartate 27 serves as a coordination point for Mg(2+). Residues 28 to 31 (GNGR), tryptophan 32, arginine 40, histidine 44, and 72 to 74 (SSE) contribute to the substrate site. Residue asparagine 75 is the Proton acceptor of the active site. Substrate-binding residues include tryptophan 76, arginine 78, and arginine 195. Residue histidine 200 participates in Mg(2+) binding. Position 201–203 (201–203 (RIS)) interacts with substrate. Glutamate 214 provides a ligand contact to Mg(2+).

The protein belongs to the UPP synthase family. As to quaternary structure, homodimer. It depends on Mg(2+) as a cofactor.

The catalysed reaction is 8 isopentenyl diphosphate + (2E,6E)-farnesyl diphosphate = di-trans,octa-cis-undecaprenyl diphosphate + 8 diphosphate. Functionally, catalyzes the sequential condensation of isopentenyl diphosphate (IPP) with (2E,6E)-farnesyl diphosphate (E,E-FPP) to yield (2Z,6Z,10Z,14Z,18Z,22Z,26Z,30Z,34E,38E)-undecaprenyl diphosphate (di-trans,octa-cis-UPP). UPP is the precursor of glycosyl carrier lipid in the biosynthesis of bacterial cell wall polysaccharide components such as peptidoglycan and lipopolysaccharide. The sequence is that of Ditrans,polycis-undecaprenyl-diphosphate synthase ((2E,6E)-farnesyl-diphosphate specific) from Blochmanniella floridana.